The following is a 270-amino-acid chain: 3-methyl-2-oxobutanoate hydroxymethyltransferase (270 aa).

2 residues coordinate Mg(2+): D50 and D89. 3-methyl-2-oxobutanoate contacts are provided by residues 50–51, D89, and K118; that span reads DS. E120 contributes to the Mg(2+) binding site. Catalysis depends on E187, which acts as the Proton acceptor.

This sequence belongs to the PanB family. In terms of assembly, homodecamer; pentamer of dimers. The cofactor is Mg(2+).

It is found in the cytoplasm. The enzyme catalyses 3-methyl-2-oxobutanoate + (6R)-5,10-methylene-5,6,7,8-tetrahydrofolate + H2O = 2-dehydropantoate + (6S)-5,6,7,8-tetrahydrofolate. Its pathway is cofactor biosynthesis; (R)-pantothenate biosynthesis; (R)-pantoate from 3-methyl-2-oxobutanoate: step 1/2. Catalyzes the reversible reaction in which hydroxymethyl group from 5,10-methylenetetrahydrofolate is transferred onto alpha-ketoisovalerate to form ketopantoate. This chain is 3-methyl-2-oxobutanoate hydroxymethyltransferase, found in Helicobacter pylori (strain G27).